The sequence spans 240 residues: Ribosomal RNA large subunit methyltransferase E (240 aa).

Residues 1 to 20 (MSKAGGNKGGVKTGGRGGAG) are compositionally biased toward gly residues. The disordered stretch occupies residues 1–27 (MSKAGGNKGGVKTGGRGGAGSSNLQVR). Residues Gly92, Trp94, Asp115, Asp131, and Asp155 each coordinate S-adenosyl-L-methionine. Lys195 (proton acceptor) is an active-site residue.

This sequence belongs to the class I-like SAM-binding methyltransferase superfamily. RNA methyltransferase RlmE family.

It localises to the cytoplasm. The enzyme catalyses uridine(2552) in 23S rRNA + S-adenosyl-L-methionine = 2'-O-methyluridine(2552) in 23S rRNA + S-adenosyl-L-homocysteine + H(+). In terms of biological role, specifically methylates the uridine in position 2552 of 23S rRNA at the 2'-O position of the ribose in the fully assembled 50S ribosomal subunit. This Brucella anthropi (strain ATCC 49188 / DSM 6882 / CCUG 24695 / JCM 21032 / LMG 3331 / NBRC 15819 / NCTC 12168 / Alc 37) (Ochrobactrum anthropi) protein is Ribosomal RNA large subunit methyltransferase E.